The following is a 408-amino-acid chain: Ribonuclease T2-like (408 aa).

The first 25 residues, 1–25, serve as a signal peptide directing secretion; the sequence is MLQSIPGPQHILKALTGSLGLSTIF. Cystine bridges form between Cys38/Cys56, Cys45/Cys92, Cys55/Cys158, and Cys100/Cys150. Residue His85 is part of the active site. N-linked (GlcNAc...) asparagine glycosylation occurs at Asn108. Active-site residues include Glu143 and His147. An N-linked (GlcNAc...) asparagine glycan is attached at Asn173. Residues Cys222 and Cys257 are joined by a disulfide bond. Positions 268–292 are disordered; the sequence is KHREPSRTTDTPSQPTTTGTPFKGR. A compositionally biased stretch (low complexity) spans 275 to 288; sequence TTDTPSQPTTTGTP. Asn372 carries N-linked (GlcNAc...) asparagine glycosylation.

Belongs to the RNase T2 family.

The protein resides in the vacuole lumen. The protein localises to the cytoplasm. The catalysed reaction is a ribonucleotidyl-ribonucleotide-RNA + H2O = a 3'-end 3'-phospho-ribonucleotide-RNA + a 5'-end dephospho-ribonucleoside-RNA + H(+). Functionally, rnase which modulates cell survival under stress conditions. Released from the vacuole to the cytoplasm during stress to promote tRNA and rRNA cleavage and to activate separately a downstream pathway that promotes cell death. Involved in cell size, vacuolar morphology and growth at high temperatures and high salt concentration. The polypeptide is Ribonuclease T2-like (rny1) (Aspergillus fumigatus (strain ATCC MYA-4609 / CBS 101355 / FGSC A1100 / Af293) (Neosartorya fumigata)).